The primary structure comprises 133 residues: Major seminal plasma glycoprotein PSP-I (133 aa).

Positions 1 to 24 are cleaved as a signal peptide; sequence MKLGSAIPWALLFSTATLISTGWG. Residues cysteine 30 and cysteine 51 are joined by a disulfide bond. Residues 30–130 enclose the CUB domain; sequence CGGRLTDDYG…SPYEIIFLRD (101 aa). N-linked (GlcNAc...) (complex) asparagine glycosylation occurs at asparagine 71. Cysteine 74 and cysteine 95 are joined by a disulfide.

In terms of assembly, monomer or heterodimer with PSP-II (depending on the type of glycosylation of PSP-I). As to expression, seminal plasma or sperm.

The protein resides in the secreted. In terms of biological role, not yet identified, major porcine seminal plasma protein. Can bind soybean trypsin inhibitor after deglycosylation. The sequence is that of Major seminal plasma glycoprotein PSP-I from Sus scrofa (Pig).